The chain runs to 834 residues: ATP-dependent RNA helicase ddx23 (834 aa).

2 disordered regions span residues 1 to 245 (MDPP…TQFS) and 322 to 371 (FGGY…GKQI). The span at 10–25 (SKRDTKKKDEVNKEQP) shows a compositional bias: basic and acidic residues. A compositionally biased stretch (polar residues) spans 42-54 (SNPTQEEPTNTLQ). Basic and acidic residues-rich tracts occupy residues 70-110 (GLKE…DYRD), 117-164 (GRDR…RRDG), 171-205 (RRRD…RDND), and 231-245 (DIHK…TQFS). The span at 328 to 362 (NNNNNGNHYNGNIYNNNNNNNNNNNNNNNINNNNN) shows a compositional bias: low complexity. The short motif at 413 to 441 (RTWQESNLPREILEAIRQLGYEKPSPIQM) is the Q motif element. The region spanning 444 to 643 (IPISLTGRDI…KKYLRRPCTI (200 aa)) is the Helicase ATP-binding domain. Position 457-464 (457-464 (AETGSGKT)) interacts with ATP. The DEAD box signature appears at 570 to 573 (DEAD). Residues 654 to 815 (RIRQTVIFVK…IVPIELLKHP (162 aa)) enclose the Helicase C-terminal domain. The tract at residues 813–834 (KHPSSQQKHGSSKDHNKSVIFK) is disordered. A compositionally biased stretch (basic and acidic residues) spans 823-834 (SSKDHNKSVIFK).

This sequence belongs to the DEAD box helicase family. DDX23/PRP28 subfamily.

The protein resides in the cytoplasm. It localises to the nucleus. It catalyses the reaction ATP + H2O = ADP + phosphate + H(+). Probable ATP-dependent RNA helicase which may be involved in mRNA splicing. The polypeptide is ATP-dependent RNA helicase ddx23 (helB2) (Dictyostelium discoideum (Social amoeba)).